Reading from the N-terminus, the 365-residue chain is MTTKLGQANPANYQQQLDDKEKATKEQFSDFWQGDIEVHPSPPSHYRMRAEFKMWQQGAEAFYAMYQPGEYKKPVTLEWEFSVGAEKIVELMPKLLEIVNASELLRKRLFQVEFLTTTTGESVTTLIYHKPLTEEWQAEANALASSLNTHIIGRSKKQKIVLTQDYVEETLTISGTPFTYKQIESGFTQPNAAVCQKMLQWAVDATANLGGDLVELYCGNGNFTLPLSKNFDKVLATEVSKTSVKAAEYNIEKNGCKNITIARMSSEEFTEALNGVREFRRLKDIELDSYNFSTVFVDPPRAGLDEDTEALISRFDNIIYISCNPDTLANNLANLCKTHKVERFALFDQFPYTDHRECGVILTKK.

S-adenosyl-L-methionine is bound by residues glutamine 189, tyrosine 217, asparagine 222, glutamate 238, and aspartate 298. Cysteine 323 (nucleophile) is an active-site residue. Glutamate 357 functions as the Proton acceptor in the catalytic mechanism.

The protein belongs to the class I-like SAM-binding methyltransferase superfamily. RNA M5U methyltransferase family. TrmA subfamily.

It catalyses the reaction uridine(54) in tRNA + S-adenosyl-L-methionine = 5-methyluridine(54) in tRNA + S-adenosyl-L-homocysteine + H(+). The catalysed reaction is uridine(341) in tmRNA + S-adenosyl-L-methionine = 5-methyluridine(341) in tmRNA + S-adenosyl-L-homocysteine + H(+). In terms of biological role, dual-specificity methyltransferase that catalyzes the formation of 5-methyluridine at position 54 (m5U54) in all tRNAs, and that of position 341 (m5U341) in tmRNA (transfer-mRNA). The polypeptide is tRNA/tmRNA (uracil-C(5))-methyltransferase (Saccharophagus degradans (strain 2-40 / ATCC 43961 / DSM 17024)).